The chain runs to 334 residues: Protein-methionine-sulfoxide reductase catalytic subunit MsrP (334 aa).

Residues 1–44 (MKKNQFLKESDVTAESVFFMKRRQVLKALGISAAALSLPHAAHA) constitute a signal peptide (tat-type signal). Mo-molybdopterin-binding positions include Asn88, 91-92 (YE), Cys146, Thr181, Asn233, Arg238, and 249-251 (GIK).

It belongs to the MsrP family. In terms of assembly, heterodimer of a catalytic subunit (MsrP) and a heme-binding subunit (MsrQ). The cofactor is Mo-molybdopterin. Predicted to be exported by the Tat system. The position of the signal peptide cleavage has not been experimentally proven.

The protein localises to the periplasm. It carries out the reaction L-methionyl-[protein] + a quinone + H2O = L-methionyl-(S)-S-oxide-[protein] + a quinol. The enzyme catalyses L-methionyl-[protein] + a quinone + H2O = L-methionyl-(R)-S-oxide-[protein] + a quinol. Its function is as follows. Part of the MsrPQ system that repairs oxidized periplasmic proteins containing methionine sulfoxide residues (Met-O), using respiratory chain electrons. Thus protects these proteins from oxidative-stress damage caused by reactive species of oxygen and chlorine generated by the host defense mechanisms. MsrPQ is essential for the maintenance of envelope integrity under bleach stress, rescuing a wide series of structurally unrelated periplasmic proteins from methionine oxidation, including the primary periplasmic chaperone SurA and the lipoprotein Pal. The catalytic subunit MsrP is non-stereospecific, being able to reduce both (R-) and (S-) diastereoisomers of methionine sulfoxide. The chain is Protein-methionine-sulfoxide reductase catalytic subunit MsrP from Escherichia coli O127:H6 (strain E2348/69 / EPEC).